The chain runs to 163 residues: ATP synthase subunit b (163 aa).

The helical transmembrane segment at 1–21 (MISFNLTSIVNLVGFLAFMFL) threads the bilayer.

It belongs to the ATPase B chain family. F-type ATPases have 2 components, F(1) - the catalytic core - and F(0) - the membrane proton channel. F(1) has five subunits: alpha(3), beta(3), gamma(1), delta(1), epsilon(1). F(0) has three main subunits: a(1), b(2) and c(10-14). The alpha and beta chains form an alternating ring which encloses part of the gamma chain. F(1) is attached to F(0) by a central stalk formed by the gamma and epsilon chains, while a peripheral stalk is formed by the delta and b chains.

Its subcellular location is the cell inner membrane. Its function is as follows. F(1)F(0) ATP synthase produces ATP from ADP in the presence of a proton or sodium gradient. F-type ATPases consist of two structural domains, F(1) containing the extramembraneous catalytic core and F(0) containing the membrane proton channel, linked together by a central stalk and a peripheral stalk. During catalysis, ATP synthesis in the catalytic domain of F(1) is coupled via a rotary mechanism of the central stalk subunits to proton translocation. Functionally, component of the F(0) channel, it forms part of the peripheral stalk, linking F(1) to F(0). The chain is ATP synthase subunit b from Petrotoga mobilis (strain DSM 10674 / SJ95).